The chain runs to 391 residues: Shewanella-like protein phosphatase 2 (391 aa).

Mn(2+) contacts are provided by Asp61, His63, Asp97, and Asn132. His133 (proton donor) is an active-site residue. Residues His232 and His295 each contribute to the Mn(2+) site.

Belongs to the metallophosphoesterase superfamily. SLP family. Mn(2+) is required as a cofactor. Expressed in roots and siliques (at protein level).

It is found in the cytoplasm. The protein resides in the cytosol. In terms of biological role, shows phosphatase activity, hydrolyzing the artificial substrate para-nitrophenylphosphate (pNPP) in vitro. This chain is Shewanella-like protein phosphatase 2, found in Arabidopsis thaliana (Mouse-ear cress).